A 78-amino-acid chain; its full sequence is Large ribosomal subunit protein bL28 (78 aa).

This sequence belongs to the bacterial ribosomal protein bL28 family.

This is Large ribosomal subunit protein bL28 from Erwinia tasmaniensis (strain DSM 17950 / CFBP 7177 / CIP 109463 / NCPPB 4357 / Et1/99).